The primary structure comprises 380 residues: Apelin receptor (380 aa).

Residues 1 to 30 (MEEGGDFDNYYGADNQSECEYTDWKSSGAL) are Extracellular-facing. Asn-15 carries an N-linked (GlcNAc...) asparagine glycan. 2 disulfide bridges follow: Cys-19–Cys-281 and Cys-102–Cys-181. Residues 31 to 54 (IPAIYMLVFLLGTTGNGLVLWTVF) form a helical membrane-spanning segment. Residues 55 to 64 (RSSREKRRSA) are Cytoplasmic-facing. The helical transmembrane segment at 65–86 (DIFIASLAVADLTFVVTLPLWA) threads the bilayer. Residues 87–99 (TYTYRDYDWPFGT) lie on the Extracellular side of the membrane. The helical transmembrane segment at 100–125 (FFCKLSSYLIFVNMYASVFCLTGLSF) threads the bilayer. Residues 126–146 (DRYLAIVRPVANARLRLRVSG) are Cytoplasmic-facing. The helical transmembrane segment at 147–164 (AVATAVLWVLAALLAMPV) threads the bilayer. The Extracellular portion of the chain corresponds to 165–198 (MVLRTTGDLENTTKVQCYMDYSMVATVSSEWAWE). Asn-175 is a glycosylation site (N-linked (GlcNAc...) asparagine). A helical membrane pass occupies residues 199 to 223 (VGLGVSSTTVGFVVPFTIMLTCYFF). At 224–246 (IAQTIAGHFRKERIEGLRKRRRL) the chain is on the cytoplasmic side. Residues 247–270 (LSIIVVLVVTFALCWMPYHLVKTL) traverse the membrane as a helical segment. The Extracellular portion of the chain corresponds to 271–289 (YMLGSLLHWPCDFDLFLMN). Residues 290-312 (IFPYCTCISYVNSCLNPFLYAFF) form a helical membrane-spanning segment. Topologically, residues 313–380 (DPRFRQACTS…PYSQETLVVD (68 aa)) are cytoplasmic. The span at 342-351 (KSASYSSGHS) shows a compositional bias: low complexity. The interval 342 to 380 (KSASYSSGHSQGPGPNMGKGGEQMHEKSIPYSQETLVVD) is disordered. Over residues 371–380 (PYSQETLVVD) the composition is skewed to polar residues.

The protein belongs to the G-protein coupled receptor 1 family. As to quaternary structure, homodimer; dimerization inhibits APLNR-mediated G protein and beta-arrestin signaling pathways compared to monomeric APLNR. Expressed in heart, brain, kidney, stomach, spleen, thymus, lung, ovary, small intestine and colon, adipose tissues and pancreas. Expressed in glial cells, astrocytes and neuronal subpopulations. Expressed in embryonic (ESCs) and induced (iPSCs) pluripotent stem cells.

Its subcellular location is the cell membrane. In terms of biological role, g protein-coupled receptor for peptide hormones apelin (APLN) and apelin receptor early endogenous ligand (APELA/ELA), that plays a role in the regulation of normal cardiovascular function and fluid homeostasis. When acting as apelin receptor, activates both G(i) protein pathway that inhibits adenylate cyclase activity, and the beta-arrestin pathway that promotes internalization of the receptor. APLNR/APJ also functions as mechanoreceptor that is activated by pathological stimuli in a G-protein-independent fashion to induce beta-arrestin signaling, hence eliciting cardiac hypertrophy. However, the presence of apelin ligand blunts cardiac hypertrophic induction from APLNR/APJ on response to pathological stimuli. Plays a key role in early development such as gastrulation, blood vessels formation and heart morphogenesis by acting as a APELA receptor. May promote angioblast migration toward the embryonic midline, i.e. the position of the future vessel formation, during vasculogenesis. Promotes sinus venosus (SV)-derived endothelial cells migration into the developing heart to promote coronary blood vessel development. Also plays a role in various processes in adults such as regulation of blood vessel formation, blood pressure, heart contractility and heart failure. Functionally, (Microbial infection) Alternative coreceptor with CD4 for HIV-1 infection; may be involved in the development of AIDS dementia. The polypeptide is Apelin receptor (Homo sapiens (Human)).